The following is a 147-amino-acid chain: Austinoid biosynthesis cluster protein H (147 aa).

This sequence belongs to the trt14 isomerase family. As to quaternary structure, homodimer.

Its pathway is secondary metabolite biosynthesis; terpenoid biosynthesis. In terms of biological role, part of the gene cluster that mediates the biosynthesis of calidodehydroaustin, a fungal meroterpenoid. The first step of the pathway is the synthesis of 3,5-dimethylorsellinic acid by the polyketide synthase ausA. 3,5-dimethylorsellinic acid is then prenylated by the polyprenyl transferase ausN. Further epoxidation by the FAD-dependent monooxygenase ausM and cyclization by the probable terpene cyclase ausL lead to the formation of protoaustinoid A. Protoaustinoid A is then oxidized to spiro-lactone preaustinoid A3 by the combined action of the FAD-binding monooxygenases ausB and ausC, and the dioxygenase ausE. Acid-catalyzed keto-rearrangement and ring contraction of the tetraketide portion of preaustinoid A3 by ausJ lead to the formation of preaustinoid A4. The aldo-keto reductase ausK, with the help of ausH, is involved in the next step by transforming preaustinoid A4 into isoaustinone which is in turn hydroxylated by the P450 monooxygenase ausI to form austinolide. The cytochrome P450 monooxygenase ausG modifies austinolide to austinol. Austinol is further acetylated to austin by the O-acetyltransferase ausP, which spontaneously changes to dehydroaustin. The cytochrome P450 monooxygenase ausR then converts dehydroaustin is into 7-dehydrodehydroaustin. The hydroxylation catalyzed by ausR permits the O-acetyltransferase ausQ to add an additional acetyl group to the molecule, leading to the formation of acetoxydehydroaustin. The short chain dehydrogenase ausT catalyzes the reduction of the double bond present between carbon atoms 1 and 2 to convert 7-dehydrodehydroaustin into 1,2-dihydro-7-hydroxydehydroaustin. AusQ catalyzes not only an acetylation reaction but also the addition of the PKS ausV diketide product to 1,2-dihydro-7-hydroxydehydroaustin, forming precalidodehydroaustin. Finally, the iron/alpha-ketoglutarate-dependent dioxygenase converts precalidodehydroaustin into calidodehydroaustin. In Aspergillus calidoustus, this protein is Austinoid biosynthesis cluster protein H.